Consider the following 141-residue polypeptide: Small ribosomal subunit protein bS18c (141 aa).

Disordered stretches follow at residues Glu-14 to Gly-55 and Ile-120 to Lys-141. The span at Pro-24–Pro-34 shows a compositional bias: pro residues. Residues Ser-35–Arg-51 show a composition bias toward basic residues.

Belongs to the bacterial ribosomal protein bS18 family. As to quaternary structure, part of the 30S ribosomal subunit.

The protein localises to the plastid. It is found in the chloroplast. This Pelargonium hortorum (Common geranium) protein is Small ribosomal subunit protein bS18c.